The following is a 236-amino-acid chain: Rho-related GTP-binding protein RhoV (236 aa).

The interval 1-28 (MPPRELSEAEPPPLPASTPPPRRRSAPP) is disordered. Pro residues predominate over residues 10–20 (EPPPLPASTPP). Ser-25 is modified (phosphoserine). GTP-binding positions include 38–45 (GDGAVGKS), 85–89 (DTAGQ), and 143–146 (TQAD). Cys-234 carries S-palmitoyl cysteine lipidation.

It belongs to the small GTPase superfamily. Rho family. Interacts with PAK2. Requires Mg(2+) as cofactor. In terms of tissue distribution, highly expressed in brain and testis and at lower levels in spleen and lung.

Its subcellular location is the cell membrane. It is found in the endosome membrane. Plays a role in the control of the actin cytoskeleton via activation of the JNK pathway. This is Rho-related GTP-binding protein RhoV from Rattus norvegicus (Rat).